The chain runs to 424 residues: Phosphomethylpyrimidine synthase (424 aa).

Residues asparagine 66, methionine 95, tyrosine 124, histidine 163, 185 to 187 (SRG), 226 to 229 (DGMR), and glutamate 265 each bind substrate. Histidine 269 contributes to the Zn(2+) binding site. Phenylalanine 292 serves as a coordination point for substrate. Histidine 333 serves as a coordination point for Zn(2+). [4Fe-4S] cluster contacts are provided by cysteine 408, cysteine 411, and cysteine 415.

It belongs to the ThiC family. [4Fe-4S] cluster is required as a cofactor.

It carries out the reaction 5-amino-1-(5-phospho-beta-D-ribosyl)imidazole + S-adenosyl-L-methionine = 4-amino-2-methyl-5-(phosphooxymethyl)pyrimidine + CO + 5'-deoxyadenosine + formate + L-methionine + 3 H(+). It functions in the pathway cofactor biosynthesis; thiamine diphosphate biosynthesis. Catalyzes the synthesis of the hydroxymethylpyrimidine phosphate (HMP-P) moiety of thiamine from aminoimidazole ribotide (AIR) in a radical S-adenosyl-L-methionine (SAM)-dependent reaction. The chain is Phosphomethylpyrimidine synthase from Thermotoga neapolitana (strain ATCC 49049 / DSM 4359 / NBRC 107923 / NS-E).